A 317-amino-acid polypeptide reads, in one-letter code: MPMQGAQRRLLGSLNSTPTATPNLGLAANHTGAPCLEVSIPDGLFLSLGLVSLVENVLVVAAIAKNRNLHSPMYCFICCLALSDLLVSGSNMLEMAVILLLEAGALATRASVVQQLQNTIDVLTCSSMLCSLCFLGAIAVDRYVSIFYALRYHSIVTLPRARRAIAAIWVASVLSSTLFIAYCDHAAVLLCLVVFFLAMLVLMAVLYVHMLARACQHAQGITRLHKRQLPAHQGFGLRGAATLTILLGIFFLCWGPFFLHLMLVVLCPQHLTCSCIFKNFKVFLTLIICNTIIDPLIYAFRSQELCRTLREVLLCSW.

The Extracellular segment spans residues 1–37; that stretch reads MPMQGAQRRLLGSLNSTPTATPNLGLAANHTGAPCLE. N-linked (GlcNAc...) asparagine glycosylation is present at N29. Residues 38-63 form a helical membrane-spanning segment; sequence VSIPDGLFLSLGLVSLVENVLVVAAI. The Cytoplasmic segment spans residues 64 to 72; it reads AKNRNLHSP. The helical transmembrane segment at 73 to 93 threads the bilayer; the sequence is MYCFICCLALSDLLVSGSNML. Residues 94–118 lie on the Extracellular side of the membrane; sequence EMAVILLLEAGALATRASVVQQLQN. A helical membrane pass occupies residues 119-140; that stretch reads TIDVLTCSSMLCSLCFLGAIAV. The Cytoplasmic portion of the chain corresponds to 141–163; it reads DRYVSIFYALRYHSIVTLPRARR. The chain crosses the membrane as a helical span at residues 164–183; it reads AIAAIWVASVLSSTLFIAYC. Residues 184-191 are Extracellular-facing; the sequence is DHAAVLLC. Residues 192-211 traverse the membrane as a helical segment; sequence LVVFFLAMLVLMAVLYVHML. Residues 212–240 lie on the Cytoplasmic side of the membrane; that stretch reads ARACQHAQGITRLHKRQLPAHQGFGLRGA. The helical transmembrane segment at 241–266 threads the bilayer; that stretch reads ATLTILLGIFFLCWGPFFLHLMLVVL. At 267 to 279 the chain is on the extracellular side; sequence CPQHLTCSCIFKN. Residues 280 to 300 form a helical membrane-spanning segment; sequence FKVFLTLIICNTIIDPLIYAF. Residues 301-317 lie on the Cytoplasmic side of the membrane; that stretch reads RSQELCRTLREVLLCSW. A lipid anchor (S-palmitoyl cysteine) is attached at C315.

The protein belongs to the G-protein coupled receptor 1 family. Interacts with MGRN1, but does not undergo MGRN1-mediated ubiquitination; this interaction competes with GNAS-binding and thus inhibits agonist-induced cAMP production. Interacts with OPN3; the interaction results in a decrease in MC1R-mediated cAMP signaling and ultimately a decrease in melanin production in melanocytes.

Its subcellular location is the cell membrane. Receptor for MSH (alpha, beta and gamma) and ACTH. The activity of this receptor is mediated by G proteins which activate adenylate cyclase. Mediates melanogenesis, the production of eumelanin (black/brown) and phaeomelanin (red/yellow), via regulation of cAMP signaling in melanocytes. The protein is Melanocyte-stimulating hormone receptor (MC1R) of Alouatta pigra (Guatemalan howler monkey).